A 301-amino-acid polypeptide reads, in one-letter code: Phosphatidylserine decarboxylase proenzyme (301 aa).

Active-site charge relay system; for autoendoproteolytic cleavage activity residues include D117, H173, and S260. S260 (schiff-base intermediate with substrate; via pyruvic acid; for decarboxylase activity) is an active-site residue. S260 is subject to Pyruvic acid (Ser); by autocatalysis.

It belongs to the phosphatidylserine decarboxylase family. PSD-B subfamily. Prokaryotic type II sub-subfamily. As to quaternary structure, heterodimer of a large membrane-associated beta subunit and a small pyruvoyl-containing alpha subunit. The cofactor is pyruvate. Is synthesized initially as an inactive proenzyme. Formation of the active enzyme involves a self-maturation process in which the active site pyruvoyl group is generated from an internal serine residue via an autocatalytic post-translational modification. Two non-identical subunits are generated from the proenzyme in this reaction, and the pyruvate is formed at the N-terminus of the alpha chain, which is derived from the carboxyl end of the proenzyme. The autoendoproteolytic cleavage occurs by a canonical serine protease mechanism, in which the side chain hydroxyl group of the serine supplies its oxygen atom to form the C-terminus of the beta chain, while the remainder of the serine residue undergoes an oxidative deamination to produce ammonia and the pyruvoyl prosthetic group on the alpha chain. During this reaction, the Ser that is part of the protease active site of the proenzyme becomes the pyruvoyl prosthetic group, which constitutes an essential element of the active site of the mature decarboxylase.

It localises to the cell membrane. It catalyses the reaction a 1,2-diacyl-sn-glycero-3-phospho-L-serine + H(+) = a 1,2-diacyl-sn-glycero-3-phosphoethanolamine + CO2. Its pathway is phospholipid metabolism; phosphatidylethanolamine biosynthesis; phosphatidylethanolamine from CDP-diacylglycerol: step 2/2. Its function is as follows. Catalyzes the formation of phosphatidylethanolamine (PtdEtn) from phosphatidylserine (PtdSer). The polypeptide is Phosphatidylserine decarboxylase proenzyme (Chlamydia trachomatis serovar L2b (strain UCH-1/proctitis)).